The sequence spans 150 residues: Flagellar assembly factor FliW (150 aa).

It belongs to the FliW family. In terms of assembly, interacts with translational regulator CsrA and flagellin(s).

Its subcellular location is the cytoplasm. Its function is as follows. Acts as an anti-CsrA protein, binds CsrA and prevents it from repressing translation of its target genes, one of which is flagellin. Binds to flagellin and participates in the assembly of the flagellum. In Leptospira borgpetersenii serovar Hardjo-bovis (strain L550), this protein is Flagellar assembly factor FliW.